A 594-amino-acid polypeptide reads, in one-letter code: UvrABC system protein C (594 aa).

The GIY-YIG domain maps to 17 to 94 (LEPGCYLMKD…IKQYQPRYNI (78 aa)). The UVR domain occupies 199-234 (KTILNHLEERMNKASEQLDFEQAKEYRDMIQHIHNL).

The protein belongs to the UvrC family. In terms of assembly, interacts with UvrB in an incision complex.

It is found in the cytoplasm. In terms of biological role, the UvrABC repair system catalyzes the recognition and processing of DNA lesions. UvrC both incises the 5' and 3' sides of the lesion. The N-terminal half is responsible for the 3' incision and the C-terminal half is responsible for the 5' incision. The polypeptide is UvrABC system protein C (Staphylococcus epidermidis (strain ATCC 35984 / DSM 28319 / BCRC 17069 / CCUG 31568 / BM 3577 / RP62A)).